The sequence spans 756 residues: 1-phosphatidylinositol 4,5-bisphosphate phosphodiesterase delta-1 (756 aa).

In terms of domain architecture, PH spans 21–130 (ALLKGSQLLK…WVLGLHKIIH (110 aa)). Residues 30-57 (KVKSSSWRRERFYKLQEDCKTIWQESRK) form a substrate binding region. EF-hand domains lie at 140 to 175 (KLQH…LNIQ) and 176 to 211 (VDDS…LTQR). Ca(2+) contacts are provided by D153, N155, D157, K159, E164, D189, S191, T193, S195, and E200. Residue S191 is glycosylated (O-linked (GlcNAc) serine). An O-linked (GlcNAc) threonine glycan is attached at T193. The PI-PLC X-box domain maps to 296–440 (QDMGQPLSHY…LKGKILLKGK (145 aa)). H311 is an active-site residue. Ca(2+) contacts are provided by N312, E341, and D343. H356 is a catalytic residue. E390 provides a ligand contact to Ca(2+). Residues K438 and K440 each contribute to the substrate site. T457 is modified (phosphothreonine). S460 carries the phosphoserine modification. Residues 492–609 (LSDMVIYCKS…GYVLKPAFLR (118 aa)) form the PI-PLC Y-box domain. Substrate contacts are provided by S522 and R549. The C2 domain maps to 611-737 (PNGTFNPRAL…QGYRHVHLMS (127 aa)). Residues I651, D653, N677, D706, Y707, and D708 each contribute to the Ca(2+) site.

As to quaternary structure, interacts with TGM2. Requires Ca(2+) as cofactor. As to expression, strongly expressed in lung, liver and heart. Also expressed at least in pancreas, kidney, skeletal muscle, placenta and brain.

The catalysed reaction is a 1,2-diacyl-sn-glycero-3-phospho-(1D-myo-inositol-4,5-bisphosphate) + H2O = 1D-myo-inositol 1,4,5-trisphosphate + a 1,2-diacyl-sn-glycerol + H(+). It catalyses the reaction a 1,2-diacyl-sn-glycero-3-phospho-(1D-myo-inositol) + H2O = 1D-myo-inositol 1-phosphate + a 1,2-diacyl-sn-glycerol + H(+). Its function is as follows. The production of the second messenger molecules diacylglycerol (DAG) and inositol 1,4,5-trisphosphate (IP3) is mediated by activated phosphatidylinositol-specific phospholipase C enzymes. Essential for trophoblast and placental development. Binds phosphatidylinositol 4,5-bisphosphate. In Homo sapiens (Human), this protein is 1-phosphatidylinositol 4,5-bisphosphate phosphodiesterase delta-1.